The primary structure comprises 77 residues: Sec-independent protein translocase protein TatA (77 aa).

The chain crosses the membrane as a helical span at residues 1-21; that stretch reads MGSFSIWHWLIVLVIVMLVFG. Positions 46–77 are disordered; the sequence is GEGKAAADPAQSKELRDSTTIDVEAKEKTRQQ.

The protein belongs to the TatA/E family. In terms of assembly, the Tat system comprises two distinct complexes: a TatABC complex, containing multiple copies of TatA, TatB and TatC subunits, and a separate TatA complex, containing only TatA subunits. Substrates initially bind to the TatABC complex, which probably triggers association of the separate TatA complex to form the active translocon.

The protein resides in the cell inner membrane. Functionally, part of the twin-arginine translocation (Tat) system that transports large folded proteins containing a characteristic twin-arginine motif in their signal peptide across membranes. TatA could form the protein-conducting channel of the Tat system. This chain is Sec-independent protein translocase protein TatA, found in Cupriavidus necator (strain ATCC 17699 / DSM 428 / KCTC 22496 / NCIMB 10442 / H16 / Stanier 337) (Ralstonia eutropha).